We begin with the raw amino-acid sequence, 277 residues long: MDQAIAGLAAGTASTLIMHPLDLAKIQMQASMNQDSKSLFQVFKSNIGSNGSIRSLYHGLSINVLGSAASWGAYFCIYDFSKRVVMSMTPFNNGEISVLQTLCSSGFAGCIVAALTNPIWVVKSRILSKRVNYTNPFFGFYDLIKNEGLRGCYAGFAPSLLGVSQGALQFMAYEKLKLWKQRRPTSLDYIFMSAASKVFAAVNMYPLLVIRTRLQVMRSPHRSIMNLVLQTWRLQGILGFYKGFLPHLLRVVPQTCITFLVYEQVGMHFKTQSSKSQ.

Solcar repeat units lie at residues 1-84 (MDQA…SKRV), 96-179 (ISVL…LKLW), and 184-268 (PTSL…VGMH). 6 consecutive transmembrane segments (helical) span residues 3–24 (QAIAGLAAGTASTLIMHPLDLA), 60–80 (LSINVLGSAASWGAYFCIYDF), 102–122 (LCSSGFAGCIVAALTNPIWVV), 152–172 (CYAGFAPSLLGVSQGALQFMA), 190–210 (IFMSAASKVFAAVNMYPLLVI), and 240–261 (FYKGFLPHLLRVVPQTCITFLV).

It belongs to the mitochondrial carrier (TC 2.A.29) family.

It localises to the mitochondrion inner membrane. This is an uncharacterized protein from Schizosaccharomyces pombe (strain 972 / ATCC 24843) (Fission yeast).